We begin with the raw amino-acid sequence, 265 residues long: Bradykinin-potentiating and C-type natriuretic peptides (265 aa).

Positions 1–23 (MVLSRLAASGLLLLALLALSVDG) are cleaved as a signal peptide. Residues 24–30 (KPVQQWA) constitute a propeptide that is removed on maturation. Pyrrolidone carboxylic acid is present on Gln-31. The propeptide occupies 44-50 (LKVQQWA). Gln-51 is modified (pyrrolidone carboxylic acid). Residues 64-70 (LTVQQWA) constitute a propeptide that is removed on maturation. Pyrrolidone carboxylic acid is present on Gln-71. A propeptide spanning residues 81 to 87 (LTVQQWA) is cleaved from the precursor. The residue at position 88 (Gln-88) is a Pyrrolidone carboxylic acid. Residues 100–106 (LEVQQWA) constitute a propeptide that is removed on maturation. Gln-107 bears the Pyrrolidone carboxylic acid mark. Residues 118-120 (APL) constitute a propeptide that is removed on maturation. At Gln-121 the chain carries Pyrrolidone carboxylic acid. A propeptide is located at residue Val-126. Residue Gln-127 is modified to Pyrrolidone carboxylic acid. Residues 132–241 (LLQPHESPAS…GGARRLKGLA (110 aa)) constitute a propeptide that is removed on maturation. The segment at 153–211 (GPEAASGVPSAGAEVGRSGSKAPAAPHRLSKSKGAAATSAASRPMRDLRPDGKQARQNW) is disordered. The segment covering 184–194 (SKGAAATSAAS) has biased composition (low complexity). Residues 196 to 206 (PMRDLRPDGKQ) show a composition bias toward basic and acidic residues. Cys-249 and Cys-265 form a disulfide bridge.

It in the N-terminal section; belongs to the bradykinin-potentiating peptide family. This sequence in the C-terminal section; belongs to the natriuretic peptide family. As to expression, expressed by the venom gland.

It is found in the secreted. It localises to the cytoplasm. Its subcellular location is the cytosol. Modestly inhibits ACE (with highest affinity for the N-site) and reveals strong bradykinin-potentiating activity. Induces nitric oxide (NO) production depended on muscarinic acetylcholine receptor M1 subtype (CHRM1) and bradykinin B2 receptor (BDKRB2) activation. Both these receptors contribute to the vasodilation induced by this peptide that may have an indirect action on BDKRB2 and a direct agonistic action on CHRM1. In terms of biological role, peptide with several activities. It inhibits the activity of the angiotensin-converting enzyme (ACE) by a preferential interaction with its C-domain. It evokes transient hypotension (-14 mmHg) similar to that evoked by 0.5 ug of bradykinin, when injected alone into rats. It has a high bradykinin-potentiating effect (120%), when 60 nmol of BPP-10c are coinjected with 0.5 ug of bradykinin into rats. Does not affect angiotensin-1 pressor effects. Shows potent and long-lasting antihypertensive activity as well as a reduction of the heart rate. It also binds and dose-dependently promotes the activation of cytosolic argininosuccinate synthase (ASS1), an enzyme that catalyzes the conversion of citrulline, L-aspartate and ATP to argininosuccinate, AMP and pyrophosphate. It also enhances ASS1-dependent arginine production in HEK 293 cells, as well as in spontaneous hypertensive rat (SHR) and Wistar rat plasma. In addition, it induces the production of nitric-oxide (NO) by HUVEC cells via the endothelial nitric-oxide synthase (NOS3), which use arginine as a substrate and produce NO. It has been shown to be internalized by ASS1-expressing endothelial (HUVEC) and kidney (HEK 293) cells, and is detected homogenously distributed within the cell cytoplasm for up to 2 hours. Its function is as follows. has a vasorelaxant activity in rat aortic strips and a diuretic potency in anesthetized rats. May act by activating natriuretic receptors (NPR1 and/or NPR2). The protein is Bradykinin-potentiating and C-type natriuretic peptides of Bothrops insularis (Golden lancehead).